The chain runs to 198 residues: Protein GrpE (198 aa).

It belongs to the GrpE family. As to quaternary structure, homodimer.

The protein resides in the cytoplasm. Participates actively in the response to hyperosmotic and heat shock by preventing the aggregation of stress-denatured proteins, in association with DnaK and GrpE. It is the nucleotide exchange factor for DnaK and may function as a thermosensor. Unfolded proteins bind initially to DnaJ; upon interaction with the DnaJ-bound protein, DnaK hydrolyzes its bound ATP, resulting in the formation of a stable complex. GrpE releases ADP from DnaK; ATP binding to DnaK triggers the release of the substrate protein, thus completing the reaction cycle. Several rounds of ATP-dependent interactions between DnaJ, DnaK and GrpE are required for fully efficient folding. This is Protein GrpE from Actinobacillus pleuropneumoniae serotype 7 (strain AP76).